Reading from the N-terminus, the 281-residue chain is MNVLSMFGRNATRETSSPAATAGRYADEGDWEGDDHQPATAEGSLAAFGLAKSYGGRKVVRDVSLDVRRGEAVGLLGPNGAGKTTVFYMITGLVKADQGRIELDGHDVTPMPMYRRARLGIGYLPQEASIFRGLSVEDNIGAVLEITEPNRKRRAEELDALLEEFKITHVRKSPSIALSGGERRRVEIARALASRPAFMLLDEPFAGIDPIAVGDIQALVRHLTTRGIGVLITDHNVRETLGLIDRAYIIHSGTVLMEGDPESIVASPDVRRLYLGEEFRL.

A disordered region spans residues M1 to P38. The ABC transporter domain occupies L45–E277. G77–T84 lines the ATP pocket.

Belongs to the ABC transporter superfamily.

The polypeptide is Probable ABC transporter ATP-binding protein AZC_3926 (Azorhizobium caulinodans (strain ATCC 43989 / DSM 5975 / JCM 20966 / LMG 6465 / NBRC 14845 / NCIMB 13405 / ORS 571)).